We begin with the raw amino-acid sequence, 417 residues long: Putative competence-damage inducible protein (417 aa).

Belongs to the CinA family.

The protein is Putative competence-damage inducible protein of Oceanobacillus iheyensis (strain DSM 14371 / CIP 107618 / JCM 11309 / KCTC 3954 / HTE831).